Here is a 192-residue protein sequence, read N- to C-terminus: 7-methyl-GTP pyrophosphatase (192 aa).

Catalysis depends on Asp69, which acts as the Proton acceptor.

Belongs to the Maf family. YceF subfamily. It depends on a divalent metal cation as a cofactor.

The protein resides in the cytoplasm. It carries out the reaction N(7)-methyl-GTP + H2O = N(7)-methyl-GMP + diphosphate + H(+). In terms of biological role, nucleoside triphosphate pyrophosphatase that hydrolyzes 7-methyl-GTP (m(7)GTP). May have a dual role in cell division arrest and in preventing the incorporation of modified nucleotides into cellular nucleic acids. This chain is 7-methyl-GTP pyrophosphatase (maf-1), found in Pseudomonas syringae pv. tomato (strain ATCC BAA-871 / DC3000).